We begin with the raw amino-acid sequence, 126 residues long: Glycine cleavage system H protein (126 aa).

Residues 21–103 (TATIGISEHA…YEGGWIVKVK (83 aa)) form the Lipoyl-binding domain. An N6-lipoyllysine modification is found at lysine 62.

It belongs to the GcvH family. In terms of assembly, the glycine cleavage system is composed of four proteins: P, T, L and H. The cofactor is (R)-lipoate.

The glycine cleavage system catalyzes the degradation of glycine. The H protein shuttles the methylamine group of glycine from the P protein to the T protein. The protein is Glycine cleavage system H protein of Vibrio campbellii (strain ATCC BAA-1116).